Reading from the N-terminus, the 89-residue chain is Small ribosomal subunit protein bS20 (89 aa).

Belongs to the bacterial ribosomal protein bS20 family.

Binds directly to 16S ribosomal RNA. The chain is Small ribosomal subunit protein bS20 from Wolbachia pipientis wMel.